A 390-amino-acid polypeptide reads, in one-letter code: uncharacterized protein (390 aa).

The next 2 membrane-spanning stretches (helical) occupy residues 27–47 and 356–376; these read GGLI…MEWI and FGGF…LASF.

The protein belongs to the ERGIC family.

It localises to the membrane. This is an uncharacterized protein from Schizosaccharomyces pombe (strain 972 / ATCC 24843) (Fission yeast).